The chain runs to 120 residues: Ribosome-binding factor A (120 aa).

Belongs to the RbfA family. Monomer. Binds 30S ribosomal subunits, but not 50S ribosomal subunits or 70S ribosomes.

The protein resides in the cytoplasm. In terms of biological role, one of several proteins that assist in the late maturation steps of the functional core of the 30S ribosomal subunit. Associates with free 30S ribosomal subunits (but not with 30S subunits that are part of 70S ribosomes or polysomes). Required for efficient processing of 16S rRNA. May interact with the 5'-terminal helix region of 16S rRNA. This is Ribosome-binding factor A from Dictyoglomus thermophilum (strain ATCC 35947 / DSM 3960 / H-6-12).